Consider the following 430-residue polypeptide: Inner membrane transport protein YbaT (430 aa).

Topologically, residues 1–14 are cytoplasmic; sequence MMNTEGNNGNKPLG. The helical transmembrane segment at 15–35 threads the bilayer; that stretch reads LWNVVSIGIGAMVGAGIFALL. Residues 36 to 38 are Periplasmic-facing; that stretch reads GQA. Residues 39–59 traverse the membrane as a helical segment; the sequence is ALLMEASTWVAFAFGGIVAMF. At 60–88 the chain is on the cytoplasmic side; sequence SGYAYARLGASYPSNGGIIDFFRRGLGNG. A helical membrane pass occupies residues 89-109; sequence VFSLALSLLYLLTLAVSIAMV. Residues 110 to 128 lie on the Periplasmic side of the membrane; it reads ARAFGAYAVQFLHEGSQEE. The chain crosses the membrane as a helical span at residues 129-149; it reads HLILLYALGIIAVMTLFNSLS. At 150 to 157 the chain is on the cytoplasmic side; that stretch reads NHAVGRLE. The chain crosses the membrane as a helical span at residues 158 to 178; the sequence is VILVGIKMMILLLLIIAGVWS. Residues 179 to 192 lie on the Periplasmic side of the membrane; sequence LQPAHISVSAPPSS. A helical membrane pass occupies residues 193-213; the sequence is GAFFSCIGITFLAYAGFGMMA. The Cytoplasmic portion of the chain corresponds to 214-228; sequence NAADKVKDPQVIMPR. A helical membrane pass occupies residues 229–249; that stretch reads AFLVAIGVTTLLYISLALVLL. The Periplasmic segment spans residues 250–272; sequence SDVSALELEKYADTAVAQAASPL. Residues 273–293 form a helical membrane-spanning segment; the sequence is LGHVGYVIVVIGALLATASAI. Residues 294–325 lie on the Cytoplasmic side of the membrane; it reads NANLFAVFNIMDNMGSERELPKLMNKSLWRQS. The chain crosses the membrane as a helical span at residues 326–346; the sequence is TWGNIIVVVLIMLMTAALNLG. Position 347 (Ser347) is a topological domain, periplasmic. Residues 348 to 368 traverse the membrane as a helical segment; that stretch reads LASVASATFLICYLAVFVVAI. The Cytoplasmic portion of the chain corresponds to 369–379; sequence RLRHDIHASLP. A helical transmembrane segment spans residues 380–400; sequence ILIVGTLVMLLVIVGFIYSLW. At 401 to 403 the chain is on the periplasmic side; that stretch reads SQG. A helical transmembrane segment spans residues 404-424; that stretch reads SRALIWIIGSLLLSLIVAMVM. The Cytoplasmic segment spans residues 425-430; the sequence is KRNKTV.

The protein belongs to the amino acid-polyamine-organocation (APC) superfamily.

It localises to the cell inner membrane. Functionally, probable amino-acid or metabolite transport protein. The protein is Inner membrane transport protein YbaT (ybaT) of Escherichia coli (strain K12).